The following is a 327-amino-acid chain: D-alanine--D-alanine ligase (327 aa).

Residues Lys113 to Ala312 enclose the ATP-grasp domain. Ala139–Thr194 serves as a coordination point for ATP. Asp266, Glu279, and Asn281 together coordinate Mg(2+).

Belongs to the D-alanine--D-alanine ligase family. It depends on Mg(2+) as a cofactor. The cofactor is Mn(2+).

The protein resides in the cytoplasm. It carries out the reaction 2 D-alanine + ATP = D-alanyl-D-alanine + ADP + phosphate + H(+). The protein operates within cell wall biogenesis; peptidoglycan biosynthesis. In terms of biological role, cell wall formation. The sequence is that of D-alanine--D-alanine ligase from Cupriavidus necator (strain ATCC 17699 / DSM 428 / KCTC 22496 / NCIMB 10442 / H16 / Stanier 337) (Ralstonia eutropha).